A 411-amino-acid polypeptide reads, in one-letter code: Alpha-N-acetylgalactosaminidase (411 aa).

Residues 1 to 17 (MLLKTVLLLGHVAQVLM) form the signal peptide. 2 cysteine pairs are disulfide-bonded: Cys38-Cys80 and Cys42-Cys49. 78–79 (DD) is a binding site for substrate. Residue Asn124 is glycosylated (N-linked (GlcNAc...) asparagine). Residues Cys127 and Cys158 are joined by a disulfide bond. A substrate-binding site is contributed by Lys154. The active-site Nucleophile is the Asp156. Asn177 carries N-linked (GlcNAc...) asparagine glycosylation. A disulfide bond links Cys187 and Cys209. Position 188 (Ser188) interacts with substrate. A glycan (N-linked (GlcNAc...) asparagine) is linked at Asn201. Positions 213 and 217 each coordinate substrate. Asp217 acts as the Proton donor in catalysis. Phosphoserine occurs at positions 322 and 332. Asn359 and Asn385 each carry an N-linked (GlcNAc...) asparagine glycan.

Belongs to the glycosyl hydrolase 27 family. As to quaternary structure, homodimer.

It localises to the lysosome. It catalyses the reaction Cleavage of non-reducing alpha-(1-&gt;3)-N-acetylgalactosamine residues from human blood group A and AB mucin glycoproteins, Forssman hapten and blood group A lacto series glycolipids.. It carries out the reaction a neolactoside IV(3)-alpha-GalNAc,IV(2)-alpha-Fuc-nLc4Cer(d18:1(4E)) + H2O = a neolactoside IV(2)-alpha-Fuc-nLc4Cer(d18:1(4E)) + N-acetyl-alpha-D-galactosamine. The catalysed reaction is a neolactoside IV(3)-alpha-GalNAc,IV(2)-alpha-Fuc-nLc4Cer(d18:0) + H2O = a neolactoside IV(2)-alpha-Fuc-nLc4Cer(d18:0) + N-acetyl-alpha-D-galactosamine. The enzyme catalyses a globoside IV3GalNAc-Gb4Cer + H2O = N-acetyl-alpha-D-galactosamine + a globoside Gb4Cer. In terms of biological role, removes terminal alpha-N-acetylgalactosamine residues from glycolipids and glycopeptides. Required for the breakdown of glycolipids. The chain is Alpha-N-acetylgalactosaminidase from Homo sapiens (Human).